The primary structure comprises 207 residues: Ribonuclease HII (207 aa).

Residues 10-199 form the RNase H type-2 domain; that stretch reads RLIAGVDEVG…VRNALLDAEL (190 aa). A divalent metal cation contacts are provided by Asp16, Glu17, and Asp108.

This sequence belongs to the RNase HII family. Requires Mn(2+) as cofactor. Mg(2+) is required as a cofactor.

Its subcellular location is the cytoplasm. It catalyses the reaction Endonucleolytic cleavage to 5'-phosphomonoester.. Functionally, endonuclease that specifically degrades the RNA of RNA-DNA hybrids. The protein is Ribonuclease HII of Erwinia tasmaniensis (strain DSM 17950 / CFBP 7177 / CIP 109463 / NCPPB 4357 / Et1/99).